A 576-amino-acid polypeptide reads, in one-letter code: Arginine--tRNA ligase (576 aa).

The 'HIGH' region signature appears at A132–H142.

Belongs to the class-I aminoacyl-tRNA synthetase family. As to quaternary structure, monomer.

Its subcellular location is the cytoplasm. It carries out the reaction tRNA(Arg) + L-arginine + ATP = L-arginyl-tRNA(Arg) + AMP + diphosphate. The polypeptide is Arginine--tRNA ligase (Ehrlichia chaffeensis (strain ATCC CRL-10679 / Arkansas)).